Reading from the N-terminus, the 483-residue chain is Regulatory protein ViaA (483 aa).

It belongs to the ViaA family. Homodimer. Interacts with RavA.

The protein resides in the cytoplasm. In terms of biological role, component of the RavA-ViaA chaperone complex, which may act on the membrane to optimize the function of some of the respiratory chains. ViaA stimulates the ATPase activity of RavA. The sequence is that of Regulatory protein ViaA from Salmonella arizonae (strain ATCC BAA-731 / CDC346-86 / RSK2980).